A 236-amino-acid chain; its full sequence is Ubiquinone biosynthesis O-methyltransferase (236 aa).

Residues Arg-39, Gly-59, Asp-80, and Met-124 each coordinate S-adenosyl-L-methionine.

This sequence belongs to the methyltransferase superfamily. UbiG/COQ3 family.

It catalyses the reaction a 3-demethylubiquinol + S-adenosyl-L-methionine = a ubiquinol + S-adenosyl-L-homocysteine + H(+). It carries out the reaction a 3-(all-trans-polyprenyl)benzene-1,2-diol + S-adenosyl-L-methionine = a 2-methoxy-6-(all-trans-polyprenyl)phenol + S-adenosyl-L-homocysteine + H(+). Its pathway is cofactor biosynthesis; ubiquinone biosynthesis. Its function is as follows. O-methyltransferase that catalyzes the 2 O-methylation steps in the ubiquinone biosynthetic pathway. This is Ubiquinone biosynthesis O-methyltransferase from Shewanella sp. (strain ANA-3).